Here is a 334-residue protein sequence, read N- to C-terminus: DNA polymerase beta (334 aa).

Positions 60, 62, and 65 each coordinate K(+). Residues lysine 60, leucine 62, and valine 65 each coordinate Na(+). Catalysis depends on lysine 72, which acts as the Nucleophile; Schiff-base intermediate with DNA; for 5'-dRP lyase activity. Position 83 is an omega-N-methylarginine; by PRMT6 (arginine 83). Positions 101, 103, and 106 each coordinate K(+). The Na(+) site is built by threonine 101, valine 103, and isoleucine 106. Arginine 149 is an a 2'-deoxyribonucleoside 5'-triphosphate binding site. Arginine 152 bears the Omega-N-methylarginine; by PRMT6 mark. A 2'-deoxyribonucleoside 5'-triphosphate is bound by residues serine 180, arginine 183, glycine 189, and aspartate 190. A DNA-binding region spans residues 183–192 (RGAESSGDMD). Mg(2+)-binding residues include aspartate 190, aspartate 192, and aspartate 255.

This sequence belongs to the DNA polymerase type-X family. In terms of assembly, monomer. Mg(2+) is required as a cofactor. Methylation by PRMT6 stimulates the polymerase activity by enhancing DNA binding and processivity. In terms of processing, ubiquitinated: monoubiquitinated by huwe1/arf-bp1. Monoubiquitinated protein is then the target of stub1/chip, which catalyzes polyubiquitination from monoubiquitin, leading to degradation by the proteasome. usp47 mediates the deubiquitination of monoubiquitinated protein, preventing polyubiquitination by STUB1/CHIP and its subsequent degradation.

It is found in the nucleus. The protein resides in the cytoplasm. It catalyses the reaction DNA(n) + a 2'-deoxyribonucleoside 5'-triphosphate = DNA(n+1) + diphosphate. The enzyme catalyses a 5'-end 2'-deoxyribose-2'-deoxyribonucleotide-DNA = (2E,4S)-4-hydroxypenten-2-al-5-phosphate + a 5'-end 5'-phospho-2'-deoxyribonucleoside-DNA + H(+). The catalysed reaction is 2'-deoxyribonucleotide-(2'-deoxyribose 5'-phosphate)-2'-deoxyribonucleotide-DNA = a 3'-end 2'-deoxyribonucleotide-(2,3-dehydro-2,3-deoxyribose 5'-phosphate)-DNA + a 5'-end 5'-phospho-2'-deoxyribonucleoside-DNA + H(+). Functionally, repair polymerase that plays a key role in base-excision repair. During this process, the damaged base is excised by specific DNA glycosylases, the DNA backbone is nicked at the abasic site by an apurinic/apyrimidic (AP) endonuclease, and POLB removes 5'-deoxyribose-phosphate from the preincised AP site acting as a 5'-deoxyribose-phosphate lyase (5'-dRP lyase); through its DNA polymerase activity, it adds one nucleotide to the 3' end of the arising single-nucleotide gap. Conducts 'gap-filling' DNA synthesis in a stepwise distributive fashion rather than in a processive fashion as for other DNA polymerases. It is also able to cleave sugar-phosphate bonds 3' to an intact AP site, acting as an AP lyase. This chain is DNA polymerase beta (polb), found in Xenopus laevis (African clawed frog).